A 472-amino-acid chain; its full sequence is N-succinylglutamate 5-semialdehyde dehydrogenase 1 (472 aa).

209 to 214 (GGVQAG) contacts NAD(+). Residues Glu232 and Cys266 contribute to the active site.

Belongs to the aldehyde dehydrogenase family. AstD subfamily.

The enzyme catalyses N-succinyl-L-glutamate 5-semialdehyde + NAD(+) + H2O = N-succinyl-L-glutamate + NADH + 2 H(+). Its pathway is amino-acid degradation; L-arginine degradation via AST pathway; L-glutamate and succinate from L-arginine: step 4/5. In terms of biological role, catalyzes the NAD-dependent reduction of succinylglutamate semialdehyde into succinylglutamate. The sequence is that of N-succinylglutamate 5-semialdehyde dehydrogenase 1 from Caulobacter vibrioides (strain ATCC 19089 / CIP 103742 / CB 15) (Caulobacter crescentus).